The chain runs to 159 residues: Small ribosomal subunit protein uS9 (159 aa).

Belongs to the universal ribosomal protein uS9 family.

The sequence is that of Small ribosomal subunit protein uS9 from Rickettsia conorii (strain ATCC VR-613 / Malish 7).